Consider the following 414-residue polypeptide: WW domain-containing oxidoreductase (414 aa).

The disordered stretch occupies residues 1–23 (MAALKYAGLEDTDSEEELPPGWE). Residues 16 to 49 (EELPPGWEERTTKDGWVYYANHLEEKTQWEHPKS) form the WW 1 domain. A Nuclear localization signal motif is present at residues 50-55 (GKRKRV). One can recognise a WW 2 domain in the interval 57-90 (GGLPYGWEQETDENGQVYFVDHINKRTTYLDPRL). 131–137 (GANSGIG) serves as a coordination point for NADP(+). Residue Ser260 participates in substrate binding. The active-site Proton acceptor is the Tyr293.

The protein belongs to the short-chain dehydrogenases/reductases (SDR) family.

The protein resides in the cytoplasm. The protein localises to the mitochondrion. It is found in the golgi apparatus. Its subcellular location is the lysosome. Functionally, putative oxidoreductase. Acts as a tumor suppressor and plays a role in apoptosis. May function synergistically with p53/TP53 to control genotoxic stress-induced cell death. Plays a role in TGFB1 signaling and TGFB1-mediated cell death. May also play a role in tumor necrosis factor (TNF)-mediated cell death. Required for normal bone development. Inhibits Wnt signaling. The polypeptide is WW domain-containing oxidoreductase (WWOX) (Gallus gallus (Chicken)).